The primary structure comprises 238 residues: Aspartate/glutamate leucyltransferase (238 aa).

The protein belongs to the R-transferase family. Bpt subfamily.

The protein resides in the cytoplasm. It catalyses the reaction N-terminal L-glutamyl-[protein] + L-leucyl-tRNA(Leu) = N-terminal L-leucyl-L-glutamyl-[protein] + tRNA(Leu) + H(+). The catalysed reaction is N-terminal L-aspartyl-[protein] + L-leucyl-tRNA(Leu) = N-terminal L-leucyl-L-aspartyl-[protein] + tRNA(Leu) + H(+). Functionally, functions in the N-end rule pathway of protein degradation where it conjugates Leu from its aminoacyl-tRNA to the N-termini of proteins containing an N-terminal aspartate or glutamate. In Shewanella sp. (strain MR-7), this protein is Aspartate/glutamate leucyltransferase.